Consider the following 172-residue polypeptide: Probable phosphatase YqeG (172 aa).

Has low dephosphorylation activity on GMP and glucose-6-phosphate. The polypeptide is Probable phosphatase YqeG (yqeG) (Bacillus subtilis (strain 168)).